The sequence spans 62 residues: Antitoxin VbhA (62 aa).

The short motif at 20–25 (SQRLEG) is the Inhibitory (S/T)XXXE(G/N) motif element. Glu-24 contributes to the ATP binding site.

As to quaternary structure, interacts with VbhT.

In terms of biological role, antitoxin component of type II toxin-antitoxin (TA) system VbhT-VbhA. Acts by inhibiting the adenylyltransferase activity of VbhT; competes with ATP-binding and prevents productive ATP-binding to VbhT. The sequence is that of Antitoxin VbhA from Bartonella schoenbuchensis (strain DSM 13525 / NCTC 13165 / R1).